A 142-amino-acid chain; its full sequence is Large ribosomal subunit protein uL13 (142 aa).

Belongs to the universal ribosomal protein uL13 family. As to quaternary structure, part of the 50S ribosomal subunit.

Functionally, this protein is one of the early assembly proteins of the 50S ribosomal subunit, although it is not seen to bind rRNA by itself. It is important during the early stages of 50S assembly. The chain is Large ribosomal subunit protein uL13 from Pyrococcus furiosus (strain ATCC 43587 / DSM 3638 / JCM 8422 / Vc1).